The sequence spans 293 residues: Undecaprenyl-diphosphatase (293 aa).

Helical transmembrane passes span 107–127, 134–154, 207–227, 243–263, and 268–288; these read WMII…KDLI, MWIT…AEKV, FSFL…LPDA, IGTL…MKFV, and FSWF…LLWL.

The protein belongs to the UppP family.

It localises to the cell membrane. The enzyme catalyses di-trans,octa-cis-undecaprenyl diphosphate + H2O = di-trans,octa-cis-undecaprenyl phosphate + phosphate + H(+). Catalyzes the dephosphorylation of undecaprenyl diphosphate (UPP). Confers resistance to bacitracin. In Corynebacterium efficiens (strain DSM 44549 / YS-314 / AJ 12310 / JCM 11189 / NBRC 100395), this protein is Undecaprenyl-diphosphatase.